A 497-amino-acid polypeptide reads, in one-letter code: Meiosis-specific serine/threonine-protein kinase MEK1 (497 aa).

One can recognise an FHA domain in the interval Val47 to Leu102. A Protein kinase domain is found at Glu162–Ile444. ATP contacts are provided by residues Val168 to Val176 and Lys199. Residue Asp290 is the Proton acceptor of the active site.

This sequence belongs to the protein kinase superfamily. CAMK Ser/Thr protein kinase family. CHEK2 subfamily.

The enzyme catalyses L-seryl-[protein] + ATP = O-phospho-L-seryl-[protein] + ADP + H(+). The catalysed reaction is L-threonyl-[protein] + ATP = O-phospho-L-threonyl-[protein] + ADP + H(+). Functionally, probable protein kinase required for meiotic recombination. This chain is Meiosis-specific serine/threonine-protein kinase MEK1 (MEK1), found in Saccharomyces cerevisiae (strain ATCC 204508 / S288c) (Baker's yeast).